The chain runs to 541 residues: CTP synthase (541 aa).

An amidoligase domain region spans residues 1 to 268; it reads MAKFIFITGG…AEIVCRRLGL (268 aa). A CTP-binding site is contributed by Ser-13. Residue Ser-13 coordinates UTP. ATP contacts are provided by residues 14–19 and Asp-71; that span reads GLGKGI. Mg(2+)-binding residues include Asp-71 and Glu-141. CTP-binding positions include 148-150, 189-194, and Lys-225; these read DIE and KTKPTQ. UTP-binding positions include 189–194 and Lys-225; that span reads KTKPTQ. One can recognise a Glutamine amidotransferase type-1 domain in the interval 293–539; that stretch reads EIALVGKYVA…IKAALEYRAG (247 aa). Gly-359 lines the L-glutamine pocket. The Nucleophile; for glutamine hydrolysis role is filled by Cys-386. Residues 387–390, Glu-410, and Arg-467 each bind L-glutamine; that span reads MGMQ. Residues His-512 and Glu-514 contribute to the active site.

Belongs to the CTP synthase family. Homotetramer.

The catalysed reaction is UTP + L-glutamine + ATP + H2O = CTP + L-glutamate + ADP + phosphate + 2 H(+). The enzyme catalyses L-glutamine + H2O = L-glutamate + NH4(+). It carries out the reaction UTP + NH4(+) + ATP = CTP + ADP + phosphate + 2 H(+). It participates in pyrimidine metabolism; CTP biosynthesis via de novo pathway; CTP from UDP: step 2/2. Its activity is regulated as follows. Allosterically activated by GTP, when glutamine is the substrate; GTP has no effect on the reaction when ammonia is the substrate. The allosteric effector GTP functions by stabilizing the protein conformation that binds the tetrahedral intermediate(s) formed during glutamine hydrolysis. Inhibited by the product CTP, via allosteric rather than competitive inhibition. Functionally, catalyzes the ATP-dependent amination of UTP to CTP with either L-glutamine or ammonia as the source of nitrogen. Regulates intracellular CTP levels through interactions with the four ribonucleotide triphosphates. This Symbiobacterium thermophilum (strain DSM 24528 / JCM 14929 / IAM 14863 / T) protein is CTP synthase.